The primary structure comprises 254 residues: Type III pantothenate kinase (254 aa).

Position 6-13 (6-13 (DVGNSNIV)) interacts with ATP. Residues Y100 and 107–110 (GADR) contribute to the substrate site. The active-site Proton acceptor is the D109. Residue D129 participates in K(+) binding. T132 is an ATP binding site. Position 184 (T184) interacts with substrate.

This sequence belongs to the type III pantothenate kinase family. As to quaternary structure, homodimer. NH4(+) serves as cofactor. K(+) is required as a cofactor.

It is found in the cytoplasm. It catalyses the reaction (R)-pantothenate + ATP = (R)-4'-phosphopantothenate + ADP + H(+). The protein operates within cofactor biosynthesis; coenzyme A biosynthesis; CoA from (R)-pantothenate: step 1/5. Catalyzes the phosphorylation of pantothenate (Pan), the first step in CoA biosynthesis. This is Type III pantothenate kinase from Geobacter sp. (strain M21).